Here is a 463-residue protein sequence, read N- to C-terminus: Cysteine--tRNA ligase (463 aa).

Position 28 (C28) interacts with Zn(2+). The 'HIGH' region motif lies at 30-40; the sequence is ITIYDLCHIGH. Positions 209, 234, and 238 each coordinate Zn(2+). Positions 266–270 match the 'KMSKS' region motif; the sequence is KMSKS. K269 serves as a coordination point for ATP.

This sequence belongs to the class-I aminoacyl-tRNA synthetase family. Monomer. The cofactor is Zn(2+).

The protein resides in the cytoplasm. The enzyme catalyses tRNA(Cys) + L-cysteine + ATP = L-cysteinyl-tRNA(Cys) + AMP + diphosphate. This is Cysteine--tRNA ligase from Proteus mirabilis (strain HI4320).